The chain runs to 137 residues: Neutral phospholipase A2 ammodytin I2 (137 aa).

Residues 1–16 (MRTLWIVAVCLIGVEG) form the signal peptide. Disulfide bonds link cysteine 42–cysteine 131, cysteine 44–cysteine 60, cysteine 59–cysteine 111, cysteine 65–cysteine 137, cysteine 66–cysteine 104, cysteine 73–cysteine 97, and cysteine 91–cysteine 102. Ca(2+) is bound by residues tyrosine 43, glycine 45, and glycine 47. Residue histidine 63 is part of the active site. Aspartate 64 serves as a coordination point for Ca(2+). Aspartate 105 is a catalytic residue.

It belongs to the phospholipase A2 family. Group II subfamily. D49 sub-subfamily. Ca(2+) serves as cofactor. In terms of tissue distribution, expressed by the venom gland.

The protein resides in the secreted. It catalyses the reaction a 1,2-diacyl-sn-glycero-3-phosphocholine + H2O = a 1-acyl-sn-glycero-3-phosphocholine + a fatty acid + H(+). Its function is as follows. Snake venom phospholipase A2 (PLA2) that has enzymatic activity but is non-toxic. Displays low binding affinity and enzymatic activity on phosphatidylserine-containing vesicles and HEK-293 plasma membranes, in contrast to ammodytoxins that have high activity on these phospholipids. PLA2 catalyzes the calcium-dependent hydrolysis of the 2-acyl groups in 3-sn-phosphoglycerides. This is Neutral phospholipase A2 ammodytin I2 from Vipera ammodytes ammodytes (Western sand viper).